Consider the following 1087-residue polypeptide: Ubiquitin-associated protein 2-like (1087 aa).

Met-1 carries the N-acetylmethionine modification. Residues 1-33 (MMTSVGTNRARGNWEQPQNQNQTQHKQRPQATA) form a disordered region. The UBA domain occupies 49-89 (DFEEKVKQLIDITGKNQDECVIALHDCNGDVNRAINVLLEG). The disordered stretch occupies residues 92-234 (DTHSWEMVGK…TGHFEPDDGT (143 aa)). Residues 118–132 (EEGKENRDRDRDYSR) show a composition bias toward basic and acidic residues. The segment covering 133-145 (RRGGPPRRGRGAS) has biased composition (basic residues). Residues Arg-187 and Arg-190 each carry the asymmetric dimethylarginine modification. The span at 213-226 (NYGNSSGNTWNNTG) shows a compositional bias: low complexity. Phosphoserine is present on residues Ser-356 and Ser-360. Positions 377 to 389 (AQHSQSGSTTTSS) are enriched in low complexity. The tract at residues 377–420 (AQHSQSGSTTTSSWDMGSTTQSPSLVQYDLKNPSDSAVHSPFTK) is disordered. Polar residues predominate over residues 390–401 (WDMGSTTQSPSL). 2 positions are modified to phosphoserine: Ser-410 and Ser-416. The residue at position 425 (Thr-425) is a Phosphothreonine. 6 positions are modified to phosphoserine: Ser-439, Ser-454, Ser-467, Ser-470, Ser-471, and Ser-477. Disordered regions lie at residues 440 to 493 (PAVA…KKAS), 530 to 656 (SDYE…IPPL), and 669 to 794 (TNQH…LPPG). Low complexity-rich tracts occupy residues 474-485 (QSSSPQPAQQKL) and 534-569 (STPT…SQES). The span at 570–656 (GYQSGPIQST…SPSTSSIPPL (87 aa)) shows a compositional bias: polar residues. Phosphoserine occurs at positions 604, 605, 608, and 609. Over residues 688–784 (TTTTQHSSTL…STRSSVATTS (97 aa)) the composition is skewed to low complexity. Phosphoserine is present on residues Ser-852 and Ser-859. Residues 865-901 (FGRGDASSPAPATTLAQPQQNQTQTHHTTQQTFLNPA) form a disordered region. A compositionally biased stretch (low complexity) spans 873-896 (PAPATTLAQPQQNQTQTHHTTQQT). Residues Ser-962 and Val-969 each carry the omega-N-methylarginine modification. 2 positions are modified to N6-acetyllysine: Val-969 and Thr-976. Residues 1040–1087 (QQPHSQILHHHLQQDGQTGSGQRSQTSSIPQKPQTNKSAYNSYSWGAN) form a disordered region. Positions 1053–1067 (QDGQTGSGQRSQTSS) are enriched in low complexity. Residues 1068 to 1087 (IPQKPQTNKSAYNSYSWGAN) show a composition bias toward polar residues.

As to quaternary structure, interacts with BMI1. Part of a complex consisting of UBAP2L, BMI1 and RNF2. Interacts with G3BP1 (via NTF2 domain); promoting stress granule formation. Acetylated. In terms of tissue distribution, ubiquitous.

Its subcellular location is the nucleus. It localises to the chromosome. It is found in the cytoplasm. The protein resides in the stress granule. Recruits the ubiquitination machinery to RNA polymerase II for polyubiquitination, removal and degradation, when the transcription-coupled nucleotide excision repair (TC-NER) machinery fails to resolve DNA damage. Plays an important role in the activity of long-term repopulating hematopoietic stem cells (LT-HSCs). Is a regulator of stress granule assembly, required for their efficient formation. Required for proper brain development and neocortex lamination. The sequence is that of Ubiquitin-associated protein 2-like from Homo sapiens (Human).